The sequence spans 396 residues: Elongation factor Tu (396 aa).

The region spanning 11-205 (KPHVNIGTIG…TVDEYVPTPE (195 aa)) is the tr-type G domain. Residues 20 to 27 (GHVDHGKT) form a G1 region. 20–27 (GHVDHGKT) serves as a coordination point for GTP. Threonine 27 lines the Mg(2+) pocket. Residues 61-65 (GITIN) form a G2 region. Positions 82-85 (DAPG) are G3. GTP-binding positions include 82–86 (DAPGH) and 137–140 (NKTD). Residues 137–140 (NKTD) are G4. The interval 175-177 (SAL) is G5.

The protein belongs to the TRAFAC class translation factor GTPase superfamily. Classic translation factor GTPase family. EF-Tu/EF-1A subfamily. In terms of assembly, monomer.

The protein resides in the cytoplasm. The catalysed reaction is GTP + H2O = GDP + phosphate + H(+). GTP hydrolase that promotes the GTP-dependent binding of aminoacyl-tRNA to the A-site of ribosomes during protein biosynthesis. This is Elongation factor Tu from Latilactobacillus sakei subsp. sakei (strain 23K) (Lactobacillus sakei subsp. sakei).